We begin with the raw amino-acid sequence, 451 residues long: Phosphoglucosamine mutase (451 aa).

The active-site Phosphoserine intermediate is serine 102. Residues serine 102, aspartate 243, aspartate 245, and aspartate 247 each contribute to the Mg(2+) site. Serine 102 carries the phosphoserine modification.

It belongs to the phosphohexose mutase family. Requires Mg(2+) as cofactor. In terms of processing, activated by phosphorylation.

It carries out the reaction alpha-D-glucosamine 1-phosphate = D-glucosamine 6-phosphate. Functionally, catalyzes the conversion of glucosamine-6-phosphate to glucosamine-1-phosphate. The sequence is that of Phosphoglucosamine mutase from Salinispora arenicola (strain CNS-205).